Reading from the N-terminus, the 109-residue chain is Spermidine export protein MdtI (109 aa).

4 helical membrane passes run 6–26 (FYPI…NILL), 36–56 (WLGI…AQAV), 64–84 (AYAL…WILF), and 88–108 (LNYK…MIKL).

Belongs to the drug/metabolite transporter (DMT) superfamily. Small multidrug resistance (SMR) (TC 2.A.7.1) family. MdtI subfamily. In terms of assembly, forms a complex with MdtJ.

The protein resides in the cell inner membrane. Its function is as follows. Catalyzes the excretion of spermidine. The chain is Spermidine export protein MdtI from Yersinia pseudotuberculosis serotype O:1b (strain IP 31758).